Consider the following 420-residue polypeptide: 2',3'-cyclic-nucleotide 3'-phosphodiesterase (420 aa).

Position 9 is a phosphoserine (Ser9). Tyr110 is modified (phosphotyrosine). Residues Ser169, Ser227, and Ser239 each carry the phosphoserine modification. His250 (proton acceptor) is an active-site residue. Substrate is bound at residue Thr252. His329 (proton donor) is an active-site residue. Residue Thr331 participates in substrate binding. A Phosphoserine modification is found at Ser358. Cys417 bears the Cysteine methyl ester mark. Cys417 carries the S-farnesyl cysteine lipid modification. Residues 418–420 constitute a propeptide, removed in mature form; that stretch reads TII.

It belongs to the 2H phosphoesterase superfamily. CNPase family. As to quaternary structure, exists as monomers and homodimers.

Its subcellular location is the membrane. It is found in the melanosome. It catalyses the reaction a nucleoside 2',3'-cyclic phosphate + H2O = a nucleoside 2'-phosphate + H(+). Its function is as follows. Catalyzes the formation of 2'-nucleotide products from 2',3'-cyclic substrates. May participate in RNA metabolism in the myelinating cell, CNP is the third most abundant protein in central nervous system myelin. The chain is 2',3'-cyclic-nucleotide 3'-phosphodiesterase from Mus musculus (Mouse).